The following is a 470-amino-acid chain: Beta-Ala-Xaa dipeptidase (470 aa).

His-87 contributes to the Zn(2+) binding site. Residue Asp-89 is part of the active site. Asp-119 lines the Zn(2+) pocket. The active-site Proton acceptor is the Glu-153. Zn(2+)-binding residues include Glu-154 and Asp-177. Substrate is bound at residue Arg-350. His-439 serves as a coordination point for Zn(2+).

It belongs to the peptidase M20A family. Zn(2+) serves as cofactor.

The protein localises to the cytoplasm. Fully inhibited by 1,10-phenanthroline or EDTA. Is a relatively unspecific dipeptidase cleaving a variety of dipeptides, notably those with an N-terminal beta-Ala or D-Ala residue, e.g. carnosine (beta-Ala-His). To a lesser extent, also shows aminopeptidase activity, since it is able to catalyze the removal of the N-terminal amino acid from a few distinct tripeptides. This is Beta-Ala-Xaa dipeptidase (pepV) from Lactobacillus delbrueckii subsp. lactis.